The following is a 308-amino-acid chain: ATP synthase gamma chain (308 aa).

This sequence belongs to the ATPase gamma chain family. F-type ATPases have 2 components, CF(1) - the catalytic core - and CF(0) - the membrane proton channel. CF(1) has five subunits: alpha(3), beta(3), gamma(1), delta(1), epsilon(1). CF(0) has three main subunits: a, b and c.

The protein resides in the cell membrane. In terms of biological role, produces ATP from ADP in the presence of a proton gradient across the membrane. The gamma chain is believed to be important in regulating ATPase activity and the flow of protons through the CF(0) complex. This chain is ATP synthase gamma chain, found in Lacticaseibacillus paracasei (strain ATCC 334 / BCRC 17002 / CCUG 31169 / CIP 107868 / KCTC 3260 / NRRL B-441) (Lactobacillus paracasei).